The sequence spans 271 residues: Phosphatidylglycerol--prolipoprotein diacylglyceryl transferase (271 aa).

The next 7 helical transmembrane spans lie at 25–45 (WYGIMYVIALLLALLLAKFFV), 60–80 (YFIWVEIGVILGARLGYILIY), 103–123 (FVGIRGMSYHGAIIGFLIATL), 134–154 (WIFLDLVALSVPLAYVFGRIG), 181–201 (PSQLYEAFLEGIVVFIIVYLA), 209–229 (GELILVYAGAYSLARFICEFY), and 235–255 (GIGFVLWGMSMGQILSFIMFI). Arg152 lines the a 1,2-diacyl-sn-glycero-3-phospho-(1'-sn-glycerol) pocket.

This sequence belongs to the Lgt family.

It localises to the cell inner membrane. The enzyme catalyses L-cysteinyl-[prolipoprotein] + a 1,2-diacyl-sn-glycero-3-phospho-(1'-sn-glycerol) = an S-1,2-diacyl-sn-glyceryl-L-cysteinyl-[prolipoprotein] + sn-glycerol 1-phosphate + H(+). Its pathway is protein modification; lipoprotein biosynthesis (diacylglyceryl transfer). Its function is as follows. Catalyzes the transfer of the diacylglyceryl group from phosphatidylglycerol to the sulfhydryl group of the N-terminal cysteine of a prolipoprotein, the first step in the formation of mature lipoproteins. The chain is Phosphatidylglycerol--prolipoprotein diacylglyceryl transferase from Campylobacter jejuni subsp. jejuni serotype O:23/36 (strain 81-176).